The chain runs to 178 residues: tRNA (cytidine(56)-2'-O)-methyltransferase (178 aa).

Residues L84, 109-113, and 127-134 each bind S-adenosyl-L-methionine; these read GAEKV and IGNQPHSE.

The protein belongs to the aTrm56 family. Homodimer.

The protein localises to the cytoplasm. The catalysed reaction is cytidine(56) in tRNA + S-adenosyl-L-methionine = 2'-O-methylcytidine(56) in tRNA + S-adenosyl-L-homocysteine + H(+). Specifically catalyzes the AdoMet-dependent 2'-O-ribose methylation of cytidine at position 56 in tRNAs. This Methanococcoides burtonii (strain DSM 6242 / NBRC 107633 / OCM 468 / ACE-M) protein is tRNA (cytidine(56)-2'-O)-methyltransferase.